The following is a 216-amino-acid chain: Octanoyltransferase (216 aa).

Positions 35–213 (NSNPDFIWIG…IIQEEFNFDF (179 aa)) constitute a BPL/LPL catalytic domain. Residues 77-84 (RGGEVTCH), 144-146 (SIG), and 157-159 (GFS) each bind substrate. The active-site Acyl-thioester intermediate is cysteine 175.

The protein belongs to the LipB family.

The protein resides in the cytoplasm. It carries out the reaction octanoyl-[ACP] + L-lysyl-[protein] = N(6)-octanoyl-L-lysyl-[protein] + holo-[ACP] + H(+). It functions in the pathway protein modification; protein lipoylation via endogenous pathway; protein N(6)-(lipoyl)lysine from octanoyl-[acyl-carrier-protein]: step 1/2. Its function is as follows. Catalyzes the transfer of endogenously produced octanoic acid from octanoyl-acyl-carrier-protein onto the lipoyl domains of lipoate-dependent enzymes. Lipoyl-ACP can also act as a substrate although octanoyl-ACP is likely to be the physiological substrate. In Prochlorococcus marinus (strain MIT 9312), this protein is Octanoyltransferase.